The following is a 125-amino-acid chain: UPF0332 protein AF_0298 (125 aa).

This sequence belongs to the UPF0332 family.

In Archaeoglobus fulgidus (strain ATCC 49558 / DSM 4304 / JCM 9628 / NBRC 100126 / VC-16), this protein is UPF0332 protein AF_0298.